The sequence spans 301 residues: Nucleosome assembly protein 1;3 (301 aa).

Residues 15-69 (VETLKNKLQALAEQHVDVLESLAPVVRKRVDVLIEIQSQHDELEAKFLEEKSALE) adopt a coiled-coil conformation. Positions 36 to 51 (LAPVVRKRVDVLIEIQ) match the Nuclear export signal motif. Residues 279 to 301 (EDYGASWVDDEEDDDDEYSDEEA) form a disordered region. Ser-297 carries the phosphoserine; by CK2 modification.

This sequence belongs to the nucleosome assembly protein (NAP) family.

The protein localises to the nucleus. The protein resides in the cytoplasm. May modulate chromatin structure by regulation of nucleosome assembly/disassembly. The sequence is that of Nucleosome assembly protein 1;3 (NAP1;3) from Oryza sativa subsp. indica (Rice).